The chain runs to 67 residues: uncharacterized protein (67 aa).

The first 28 residues, 1–28 (MSHVSVIAARLLVWVGILLCLGVPQLWA), serve as a signal peptide directing secretion. Residue N39 is glycosylated (N-linked (GlcNAc...) asparagine; by host).

This is an uncharacterized protein from Invertebrate iridescent virus 3 (IIV-3).